Consider the following 117-residue polypeptide: Anti-adapter protein IraM (117 aa).

The protein belongs to the IraM/RssC family.

The protein resides in the cytoplasm. Its function is as follows. Involved in the stabilization of the sigma stress factor RpoS. The chain is Anti-adapter protein IraM from Klebsiella pneumoniae (strain 342).